A 305-amino-acid polypeptide reads, in one-letter code: UDP-3-O-acyl-N-acetylglucosamine deacetylase (305 aa).

Positions 78, 237, and 241 each coordinate Zn(2+). H264 serves as the catalytic Proton donor.

It belongs to the LpxC family. It depends on Zn(2+) as a cofactor.

It carries out the reaction a UDP-3-O-[(3R)-3-hydroxyacyl]-N-acetyl-alpha-D-glucosamine + H2O = a UDP-3-O-[(3R)-3-hydroxyacyl]-alpha-D-glucosamine + acetate. It participates in glycolipid biosynthesis; lipid IV(A) biosynthesis; lipid IV(A) from (3R)-3-hydroxytetradecanoyl-[acyl-carrier-protein] and UDP-N-acetyl-alpha-D-glucosamine: step 2/6. Catalyzes the hydrolysis of UDP-3-O-myristoyl-N-acetylglucosamine to form UDP-3-O-myristoylglucosamine and acetate, the committed step in lipid A biosynthesis. The protein is UDP-3-O-acyl-N-acetylglucosamine deacetylase of Dechloromonas aromatica (strain RCB).